Here is a 486-residue protein sequence, read N- to C-terminus: GDP-Man:Man(3)GlcNAc(2)-PP-Dol alpha-1,2-mannosyltransferase (486 aa).

Over M1–A16 the chain is Lumenal. The helical transmembrane segment at L17–I37 threads the bilayer. At C38–K229 the chain is on the cytoplasmic side. The helical intramembrane region spans L230–I250. The Cytoplasmic segment spans residues M251 to H393. The helical intramembrane region spans F394–G414. At G415–K486 the chain is on the cytoplasmic side.

The protein belongs to the glycosyltransferase group 1 family. Glycosyltransferase 4 subfamily.

The protein localises to the endoplasmic reticulum membrane. It carries out the reaction an alpha-D-Man-(1-&gt;3)-[alpha-D-Man-(1-&gt;6)]-beta-D-Man-(1-&gt;4)-beta-D-GlcNAc-(1-&gt;4)-alpha-D-GlcNAc-diphospho-di-trans,poly-cis-dolichol + 2 GDP-alpha-D-mannose = an alpha-D-Man-(1-&gt;2)-alpha-D-Man-(1-&gt;2)-alpha-D-Man-(1-&gt;3)-[alpha-D-Man-(1-&gt;6)]-beta-D-Man-(1-&gt;4)-beta-D-GlcNAc-(1-&gt;4)-alpha-D-GlcNAc-diphospho-di-trans,poly-cis-dolichol + 2 GDP + 2 H(+). It participates in protein modification; protein glycosylation. Its function is as follows. GDP-Man:Man(3)GlcNAc(2)-PP-Dol alpha-1,2-mannosyltransferase that operates in the biosynthetic pathway of dolichol-linked oligosaccharides, the glycan precursors employed in protein asparagine (N)-glycosylation. The assembly of dolichol-linked oligosaccharides begins on the cytosolic side of the endoplasmic reticulum membrane and finishes in its lumen. The sequential addition of sugars to dolichol pyrophosphate produces dolichol-linked oligosaccharides containing fourteen sugars, including two GlcNAcs, nine mannoses and three glucoses. Once assembled, the oligosaccharide is transferred from the lipid to nascent proteins by oligosaccharyltransferases. Catalyzes, on the cytoplasmic face of the endoplasmic reticulum, the addition of the fourth and fifth mannose residues to the dolichol-linked oligosaccharide chain, to produce Man(5)GlcNAc(2)-PP-dolichol core oligosaccharide. Man(5)GlcNAc(2)-PP-dolichol is a substrate for ALG3, the following enzyme in the biosynthetic pathway. The chain is GDP-Man:Man(3)GlcNAc(2)-PP-Dol alpha-1,2-mannosyltransferase (alg11) from Xenopus laevis (African clawed frog).